The chain runs to 313 residues: Ribosomal RNA small subunit methyltransferase H (313 aa).

Residues 35–37, Asp55, Phe80, Asp102, and Gln109 contribute to the S-adenosyl-L-methionine site; that span reads GGH.

This sequence belongs to the methyltransferase superfamily. RsmH family.

The protein localises to the cytoplasm. The catalysed reaction is cytidine(1402) in 16S rRNA + S-adenosyl-L-methionine = N(4)-methylcytidine(1402) in 16S rRNA + S-adenosyl-L-homocysteine + H(+). Specifically methylates the N4 position of cytidine in position 1402 (C1402) of 16S rRNA. The chain is Ribosomal RNA small subunit methyltransferase H from Shewanella oneidensis (strain ATCC 700550 / JCM 31522 / CIP 106686 / LMG 19005 / NCIMB 14063 / MR-1).